Consider the following 727-residue polypeptide: Glucans biosynthesis glucosyltransferase H (727 aa).

The interval 18–43 (SAMPNERPGAMEPQSLSQMPEGFPRR) is disordered. Helical transmembrane passes span 58–78 (FFVVGGALALSAFAIYEMGAV), 94–114 (LFAINFCWIALAFCSGIAGFF), 278–298 (LQQFAARIYGPVIGTGLGWWV), 408–428 (IMAYLSSPFWLLLILTGLMLA), 460–480 (LFYITMGVLFGPKIFGVLLLL), 496–516 (ILSVIFEVILSALIAPIMMFI), and 572–592 (LLAWMSPALIGLWLAVPISAW).

It belongs to the glycosyltransferase 2 family. OpgH subfamily.

It is found in the cell inner membrane. It participates in glycan metabolism; osmoregulated periplasmic glucan (OPG) biosynthesis. In terms of biological role, involved in the biosynthesis of osmoregulated periplasmic glucans (OPGs). The chain is Glucans biosynthesis glucosyltransferase H from Shewanella sp. (strain ANA-3).